The sequence spans 104 residues: Putative thioredoxin-4 (104 aa).

The region spanning serine 2–lysine 104 is the Thioredoxin domain. Catalysis depends on nucleophile residues cysteine 31 and cysteine 34. A disulfide bridge links cysteine 31 with cysteine 34.

The protein belongs to the thioredoxin family.

Participates in various redox reactions through the reversible oxidation of its active center dithiol to a disulfide and catalyzes dithiol-disulfide exchange reactions. The sequence is that of Putative thioredoxin-4 (trxD) from Dictyostelium discoideum (Social amoeba).